A 376-amino-acid polypeptide reads, in one-letter code: Zinc-regulated transporter 1 (376 aa).

Residues 1 to 50 (MSNVTTPWWKQWDPSEVTLADKTPDDVWKTCVLQGVYFGGNEYNGNLGAR) lie on the Extracellular side of the membrane. The chain crosses the membrane as a helical span at residues 51 to 71 (ISSVFVILFVSTFFTMFPLIS). Topologically, residues 72 to 80 (TKVKRLRIP) are cytoplasmic. A helical transmembrane segment spans residues 81–101 (LYVYLFAKYFGSGVIVATAFI). The Extracellular portion of the chain corresponds to 102–122 (HLMDPAYGAIGGTTCVGQTGN). Residues 123 to 143 (WGLYSWCPAIMLTSLTFTFLT) traverse the membrane as a helical segment. Topologically, residues 144–216 (DLFSSVWVER…TSMDVVQSFQ (73 aa)) are cytoplasmic. A compositionally biased stretch (polar residues) spans 177–191 (VSSENDNENGTANGS). The segment at 177–196 (VSSENDNENGTANGSHDTKN) is disordered. The helical transmembrane segment at 217 to 237 (AQFYAFLILEFGVIFHSVMIG) threads the bilayer. Topologically, residues 238 to 242 (LNLGS) are extracellular. Residues 243 to 263 (VGDEFSSLYPVLVFHQSFEGL) form a helical membrane-spanning segment. Residues 264-278 (GIGARLSAIEFPRSK) lie on the Cytoplasmic side of the membrane. Residues 279 to 299 (RWWPWALCVAYGLTTPICVAI) form a helical membrane-spanning segment. Topologically, residues 300-310 (GLGVRTRYVSG) are extracellular. A helical membrane pass occupies residues 311–331 (SYTALVISGVLDAISAGILLY). Over 332–354 (TGLVELLARDFIFNPQRTKDLRE) the chain is Cytoplasmic. Residues 355–375 (LSFNVICTLFGAGIMALIGKW) form a helical membrane-spanning segment. Position 376 (Ala-376) is a topological domain, extracellular.

Belongs to the ZIP transporter (TC 2.A.5) family.

It is found in the membrane. Functionally, high-affinity zinc transport protein. The sequence is that of Zinc-regulated transporter 1 (ZRT1) from Saccharomyces cerevisiae (strain ATCC 204508 / S288c) (Baker's yeast).